Reading from the N-terminus, the 209-residue chain is Pyrrolidone-carboxylate peptidase (209 aa).

Residues Glu79, Cys142, and His164 contribute to the active site.

It belongs to the peptidase C15 family. In terms of assembly, homotetramer.

The protein resides in the cytoplasm. It carries out the reaction Release of an N-terminal pyroglutamyl group from a polypeptide, the second amino acid generally not being Pro.. Functionally, removes 5-oxoproline from various penultimate amino acid residues except L-proline. In Saccharolobus islandicus (strain Y.N.15.51 / Yellowstone #2) (Sulfolobus islandicus), this protein is Pyrrolidone-carboxylate peptidase.